The sequence spans 457 residues: Phosphomethylpyrimidine synthase (457 aa).

Substrate-binding positions include Asn81, Met110, Tyr139, His175, 195–197 (SRG), 236–239 (DALR), and Glu275. Position 279 (His279) interacts with Zn(2+). Tyr302 provides a ligand contact to substrate. Residue His343 participates in Zn(2+) binding. The [4Fe-4S] cluster site is built by Cys423, Cys426, and Cys431.

It belongs to the ThiC family. The cofactor is [4Fe-4S] cluster.

It carries out the reaction 5-amino-1-(5-phospho-beta-D-ribosyl)imidazole + S-adenosyl-L-methionine = 4-amino-2-methyl-5-(phosphooxymethyl)pyrimidine + CO + 5'-deoxyadenosine + formate + L-methionine + 3 H(+). It functions in the pathway cofactor biosynthesis; thiamine diphosphate biosynthesis. Catalyzes the synthesis of the hydroxymethylpyrimidine phosphate (HMP-P) moiety of thiamine from aminoimidazole ribotide (AIR) in a radical S-adenosyl-L-methionine (SAM)-dependent reaction. In Aquifex aeolicus (strain VF5), this protein is Phosphomethylpyrimidine synthase.